Consider the following 211-residue polypeptide: Metalloproteinase inhibitor 3 (211 aa).

The N-terminal stretch at 1–23 (MTPWLGLVVLLSCWSLGHWGTEA) is a signal peptide. Residue Cys-24 participates in Zn(2+) binding. Involved in metalloproteinase-binding stretches follow at residues 24-27 (CTCS) and 88-89 (ES). 6 disulfides stabilise this stretch: Cys-24–Cys-91, Cys-26–Cys-118, Cys-36–Cys-143, Cys-145–Cys-192, Cys-150–Cys-155, and Cys-163–Cys-184. Residues 24–143 (CTCSPSHPQD…GLNYRYHLGC (120 aa)) enclose the NTR domain. The interval 105 to 188 (TGRVYEGKMY…SKHYACIRQK (84 aa)) is mediates interaction with EFEMP1.

It belongs to the protease inhibitor I35 (TIMP) family. Interacts with EFEMP1. Interacts with KDR.

It localises to the secreted. Its subcellular location is the extracellular space. It is found in the extracellular matrix. Mediates a variety of processes including matrix regulation and turnover, inflammation, and angiogenesis, through reversible inhibition of zinc protease superfamily enzymes, primarily matrix metalloproteinases (MMPs). Regulates extracellular matrix (ECM) remodeling through inhibition of matrix metalloproteinases (MMP) including MMP-1, MMP-2, MMP-3, MMP-7, MMP-9, MMP-13, MMP-14 and MMP-15. Additionally, modulates the processing of amyloid precursor protein (APP) and apolipoprotein E receptor ApoER2 by inhibiting two alpha-secretases ADAM10 and ADAM17. Functions as a tumor suppressor and a potent inhibitor of angiogenesis. Exerts its anti-angiogenic effect by directly interacting with vascular endothelial growth factor (VEGF) receptor-2/KDR, preventing its binding to the VEGFA ligand. Selectively induces apoptosis in angiogenic endothelial cells through a caspase-independent cell death pathway. Mechanistically, inhibits matrix-induced focal adhesion kinase PTK2 tyrosine phosphorylation and association with paxillin/PXN and disrupts the incorporation of ITGB3, PTK2 and PXN into focal adhesion contacts on the matrix. This chain is Metalloproteinase inhibitor 3 (Timp3), found in Rattus norvegicus (Rat).